Reading from the N-terminus, the 356-residue chain is Proline-rich protein 19 (356 aa).

A compositionally biased stretch (polar residues) spans 1-12 (MDTQGPVSQPFQ). Disordered regions lie at residues 1 to 53 (MDTQ…RDPP), 95 to 143 (LVPG…ELSG), 216 to 255 (INSP…RGSL), and 312 to 331 (PSSP…SPPS). A compositionally biased stretch (basic residues) spans 19–29 (RVRRRKTRRER).

As to quaternary structure, interacts with CNTD1.

The protein resides in the nucleus. The protein localises to the chromosome. Its function is as follows. Promotes meiotic crossing over formation through its interaction with CNTD1 by participating in the crossover differentiation step of crossover-specific recombination intermediates. The chain is Proline-rich protein 19 from Homo sapiens (Human).